The following is a 223-amino-acid chain: RNA-free ribonuclease P (223 aa).

It belongs to the HARP family.

The enzyme catalyses Endonucleolytic cleavage of RNA, removing 5'-extranucleotides from tRNA precursor.. Functionally, RNA-free RNase P that catalyzes the removal of the 5'-leader sequence from pre-tRNA to produce the mature 5'-terminus. In Methanococcus maripaludis (strain C6 / ATCC BAA-1332), this protein is RNA-free ribonuclease P.